We begin with the raw amino-acid sequence, 326 residues long: Ribosomal large subunit pseudouridine synthase D (326 aa).

Residues 18–91 form the S4 RNA-binding domain; that stretch reads QRLDQALAEM…IPLDIVYEDE (74 aa). Asp139 is an active-site residue.

Belongs to the pseudouridine synthase RluA family. In late stage pre-50S ribosomal subunit interacts with ObgE and DarP(YjgA).

The protein resides in the cytoplasm. The enzyme catalyses uridine(1911/1915/1917) in 23S rRNA = pseudouridine(1911/1915/1917) in 23S rRNA. In terms of biological role, responsible for synthesis of pseudouridine from uracil at positions 1911, 1915 and 1917 in 23S ribosomal RNA. Other positions are not modified. Uridine isomerization occurs as a late step during the assembly of the large ribosomal subunit. Member of a network of 50S ribosomal subunit biogenesis factors (ObgE, RluD, RsfS and DarP(YjgA)) which assembles along the 30S-50S interface, allowing 23S rRNA modification and preventing incorrect 23S rRNA structures from forming. The protein is Ribosomal large subunit pseudouridine synthase D of Escherichia coli (strain K12).